The chain runs to 413 residues: Putative glutamate--cysteine ligase 2 (413 aa).

The segment at 392 to 413 (GGVCALSTPQGDPLPGWAERLH) is disordered.

The protein belongs to the glutamate--cysteine ligase type 2 family. YbdK subfamily.

The catalysed reaction is L-cysteine + L-glutamate + ATP = gamma-L-glutamyl-L-cysteine + ADP + phosphate + H(+). Its function is as follows. ATP-dependent carboxylate-amine ligase which exhibits weak glutamate--cysteine ligase activity. The polypeptide is Putative glutamate--cysteine ligase 2 (Bordetella bronchiseptica (strain ATCC BAA-588 / NCTC 13252 / RB50) (Alcaligenes bronchisepticus)).